The sequence spans 564 residues: Rhotekin (564 aa).

R14 carries the omega-N-methylarginine modification. An REM-1 domain is found at 17–98 (ALEMEFKRGR…LQRRKEAQVL (82 aa)). Phosphoserine occurs at positions 30 and 106. An Asymmetric dimethylarginine modification is found at R230. S232 is subject to Phosphoserine. Residues 309 to 416 (QPTASGALRV…WMEALWQLFF (108 aa)) form the PH domain. The disordered stretch occupies residues 518–564 (TFSLDAAPADHSLGPSRSVAPLPPQRSPKSRGFYSKSQLGPWLQSPV). Residues S520, S529, and S544 each carry the phosphoserine modification.

Interacts via its C-terminal region with the TAX1BP3 PDZ domain. This interaction facilitates Rho-mediated activation of the c-Fos serum response element (SRE). Interacts with SEPT9. Specifically binds to GTP-bound RHOA, RHOB and RHOC and inhibits their GTPase activity. In terms of tissue distribution, abundantly expressed in brain and kidney. Weakly expressed in lung, testis, skeletal muscle, heart and thymus.

Its function is as follows. Mediates Rho signaling to activate NF-kappa-B and may confer increased resistance to apoptosis to cells in gastric tumorigenesis. May play a novel role in the organization of septin structures. This Mus musculus (Mouse) protein is Rhotekin.